The primary structure comprises 326 residues: dTDP-4-dehydro-6-deoxy-D-allose reductase (326 aa).

NADP(+)-binding positions include 15 to 21 (GALGFIG) and 129 to 132 (MSSS). Tyr160 acts as the Proton donor/acceptor in catalysis. Residues Lys164 and 187–190 (PGNV) contribute to the NADP(+) site.

The protein belongs to the NAD(P)-dependent epimerase/dehydratase family.

The enzyme catalyses dTDP-6-deoxy-alpha-D-allose + NAD(+) = dTDP-4-dehydro-6-deoxy-alpha-D-allose + NADH + H(+). It catalyses the reaction dTDP-6-deoxy-alpha-D-allose + NADP(+) = dTDP-4-dehydro-6-deoxy-alpha-D-allose + NADPH + H(+). In terms of biological role, catalyzes the stereospecific reduction of the C-4 keto group of dTDP-4-dehydro-6-deoxy-D-allose, leading to dTDP-6-deoxy-D-allose, an intermediate in the biosynthesis of the mycinose moiety of the chalcomycin antibiotic. This chain is dTDP-4-dehydro-6-deoxy-D-allose reductase (chmD), found in Streptomyces bikiniensis.